The primary structure comprises 306 residues: Glutathione transport system permease protein GsiC (306 aa).

The Cytoplasmic portion of the chain corresponds to 1–8 (MLNYVIKR). A helical transmembrane segment spans residues 9–29 (LLGLIPTLFIVSVLVFLFVHM). The Periplasmic segment spans residues 30–102 (LPGDPARLIA…SRFMPTLWLT (73 aa)). Residues 95-292 (FMPTLWLTIT…LEFILINLVV (198 aa)) form the ABC transmembrane type-1 domain. Residues 103-123 (ITSMVWAVIFGMAAGIIAAVW) form a helical membrane-spanning segment. The Cytoplasmic segment spans residues 124–134 (RNRWPDRLSMT). Residues 135-155 (IAVSGISFPAFALGMFLIQVF) traverse the membrane as a helical segment. Topologically, residues 156-168 (SVELGWLPTVGAD) are periplasmic. The helical transmembrane segment at 169-189 (SWQHYILPSLTLGAAVAAVMA) threads the bilayer. Topologically, residues 190–228 (RFTRASFVDVLSEDYMRTARAKGVSETWVVLKHGLRNAM) are cytoplasmic. The helical transmembrane segment at 229–249 (IPVVTMMGLQFGFLLGGSIVV) threads the bilayer. Residues 250-277 (EKVFNWPGLGRLLVDSVEMRDYPVIQAE) are Periplasmic-facing. Residues 278-298 (ILLFSLEFILINLVVDVLYAA) form a helical membrane-spanning segment. Residues 299–306 (INPAIRYK) are Cytoplasmic-facing.

This sequence belongs to the binding-protein-dependent transport system permease family. As to quaternary structure, the complex is composed of two ATP-binding proteins (GsiA), two transmembrane proteins (GsiC and GsiD) and a solute-binding protein (GsiB).

It is found in the cell inner membrane. Functionally, part of the ABC transporter complex GsiABCD involved in glutathione import. Probably responsible for the translocation of the substrate across the membrane. The polypeptide is Glutathione transport system permease protein GsiC (Shigella flexneri serotype 5b (strain 8401)).